The following is a 270-amino-acid chain: Transcription factor PU.1 (270 aa).

A disordered region spans residues Leu-124–Gly-162. Residues Ser-140 and Ser-146 each carry the phosphoserine modification. The span at Leu-153 to Gly-162 shows a compositional bias: low complexity. Positions Ile-170 to Ser-253 form a DNA-binding region, ETS. 4 residues coordinate DNA: Lys-217, Arg-230, Arg-233, and Lys-243.

The protein belongs to the ETS family. In terms of assembly, binds DNA as a monomer. Can form homomers. Directly interacts with CEBPD/NF-IL6-beta; this interaction does not affect DNA-binding properties of each partner. Interacts with NONO/p54(nrb). Interacts with RUNX1/AML1. Interacts with GFI1; the interaction represses SPI1 transcriptional activity, hence blocks SPI1-induced macrophage differentiation of myeloid progenitor cells. Interacts with CEBPE. Interacts with IRF4/Pip and IRF8. Interacts with JUN. Interacts with RB1. Interacts with TBP.

It is found in the nucleus. Transcriptional activity at macrophage-specific genes is inhibited by interaction with GFI1, which results in the inhibition of SPI1-induced macrophage differentiation of myeloid progenitor cells, but not that of the granulocyte lineage. Functionally, pioneer transcription factor, which controls hematopoietic cell fate by decompacting stem cell heterochromatin and allowing other transcription factors to enter otherwise inaccessible genomic sites. Once in open chromatin, can directly control gene expression by binding genetic regulatory elements and can also more broadly influence transcription by recruiting transcription factors, such as interferon regulatory factors (IRFs), to otherwise inaccessible genomic regions. Transcriptionally activates genes important for myeloid and lymphoid lineages, such as CSF1R. Transcriptional activation from certain promoters, possibly containing low affinity binding sites, is achieved cooperatively with other transcription factors. FCER1A transactivation is achieved in cooperation with GATA1. May be particularly important for the pro- to pre-B cell transition. Binds (via the ETS domain) onto the purine-rich DNA core sequence 5'-GAGGAA-3', also known as the PU-box. In vitro can bind RNA and interfere with pre-mRNA splicing. This Sus scrofa (Pig) protein is Transcription factor PU.1 (SPI1).